The chain runs to 409 residues: Coagulation factor IX (409 aa).

Positions 1, 2, 7, 8, 16, 18, 21, 22, 27, 28, and 31 each coordinate Ca(2+). A Gla domain is found at Tyr-1 to Val-47. 4-carboxyglutamate is present on residues Glu-7, Glu-8, Glu-16, Glu-18, Glu-21, Glu-22, Glu-27, Glu-28, Glu-31, Glu-34, Glu-37, and Glu-41. Glu-16 contacts Mg(2+). A disulfide bridge links Cys-19 with Cys-24. Glu-21 contributes to the Mg(2+) binding site. Glu-27 provides a ligand contact to Mg(2+). Glu-31 lines the Mg(2+) pocket. Positions 37, 41, 48, 49, and 51 each coordinate Ca(2+). Residues Glu-37 and Glu-41 each coordinate Mg(2+). The EGF-like 1; calcium-binding domain occupies Asp-48 to Glu-84. Intrachain disulfides connect Cys-52–Cys-63, Cys-57–Cys-72, Cys-74–Cys-83, Cys-89–Cys-100, Cys-96–Cys-110, Cys-112–Cys-125, Cys-133–Cys-291, Cys-208–Cys-224, Cys-338–Cys-352, and Cys-363–Cys-391. Positions 65 and 66 each coordinate Ca(2+). The residue at position 65 (Asp-65) is a (3R)-3-hydroxyaspartate. A Phosphoserine modification is found at Ser-69. The EGF-like 2 domain occupies Leu-85–Lys-126. The propeptide at Ala-148–Arg-182 is activation peptide. Tyr-157 carries the post-translational modification Sulfotyrosine. Residue Ser-160 is modified to Phosphoserine. Thr-161 bears the Phosphothreonine; alternate mark. Thr-161 carries an O-linked (GalNAc...) threonine; alternate glycan. O-linked (GalNAc...) threonine glycosylation is present at Thr-171. An N-linked (GlcNAc...) asparagine glycan is attached at Asn-174. One can recognise a Peptidase S1 domain in the interval Ile-183–Trp-409. His-223 functions as the Charge relay system in the catalytic mechanism. Positions 237, 239, 242, 244, and 247 each coordinate Ca(2+). Residue Asn-262 is glycosylated (N-linked (GlcNAc...) asparagine). Asp-271 serves as the catalytic Charge relay system. Catalysis depends on Ser-367, which acts as the Charge relay system.

This sequence belongs to the peptidase S1 family. As to quaternary structure, heterodimer of a light chain and a heavy chain; disulfide-linked. Interacts (inactive and activated) with F11 (activated) in calcium-dependent manner. Interacts with SERPINC1. Post-translationally, activated by factor XIa, which excises the activation peptide. The propeptide can also be removed by snake venom protease. Activated by coagulation factor VIIa-tissue factor (F7-F3) complex in calcium-dependent manner. The iron and 2-oxoglutarate dependent 3-hydroxylation of aspartate and asparagine is (R) stereospecific within EGF domains.

The protein resides in the secreted. It catalyses the reaction Selective cleavage of Arg-|-Ile bond in factor X to form factor Xa.. Functionally, factor IX is a vitamin K-dependent plasma protein that participates in the intrinsic pathway of blood coagulation by converting factor X to its active form in the presence of Ca(2+) ions, phospholipids, and factor VIIIa. In Sus scrofa (Pig), this protein is Coagulation factor IX (F9).